The following is a 267-amino-acid chain: Methylglyoxal reductase DkgB (267 aa).

Tyrosine 39 serves as the catalytic Proton donor. Histidine 97 contributes to the substrate binding site. Position 179-231 (179-231 (MTLAYGKALKDEVIARIAAKHNATPAQVILAWAMGEGYSVIPSSTRRENLASS)) interacts with NADP(+).

It belongs to the aldo/keto reductase family. As to quaternary structure, monomer.

The protein localises to the cytoplasm. It catalyses the reaction hydroxyacetone + NADP(+) = methylglyoxal + NADPH + H(+). Aldo-keto reductase that significantly contributes to cellular methylglyoxal detoxification by catalyzing the NADPH-dependent conversion of methylglyoxal to acetol. In Salmonella typhimurium (strain LT2 / SGSC1412 / ATCC 700720), this protein is Methylglyoxal reductase DkgB.